The chain runs to 173 residues: Disulfide bond formation protein B (173 aa).

Over 1–11 (MNALQWSFRAQ) the chain is Cytoplasmic. A helical membrane pass occupies residues 12 to 28 (CLTGFLFCTGLLAYAIF). Topologically, residues 29–46 (LQLHQGLEPCPLCIFQRI) are periplasmic. Cysteine 38 and cysteine 41 are disulfide-bonded. The chain crosses the membrane as a helical span at residues 47–63 (AFAVLGILFLIAGLYNS). Residues 64 to 70 (SNVYTRK) lie on the Cytoplasmic side of the membrane. The chain crosses the membrane as a helical span at residues 71–88 (AYGLLIFLTAIIGTGIAG). The Periplasmic segment spans residues 89–145 (RHVWVQLMPHNTISSCGSPLSFLSETMGPFEVFRTVLTGTSNCGNIDWRFLGLSMPM). Cysteine 104 and cysteine 131 are disulfide-bonded. The helical transmembrane segment at 146–164 (WSMFWFVALALLGLLVGFK) threads the bilayer. Residues 165–173 (AERRKPLFS) are Cytoplasmic-facing.

This sequence belongs to the DsbB family.

Its subcellular location is the cell inner membrane. Functionally, required for disulfide bond formation in some periplasmic proteins. Acts by oxidizing the DsbA protein. In Xylella fastidiosa (strain Temecula1 / ATCC 700964), this protein is Disulfide bond formation protein B.